The following is a 426-amino-acid chain: Trigger factor 1 (426 aa).

The region spanning 163–248 (QDTVNIDFAG…VNKLKRKEYA (86 aa)) is the PPIase FKBP-type domain.

This sequence belongs to the FKBP-type PPIase family. Tig subfamily.

It is found in the cytoplasm. It carries out the reaction [protein]-peptidylproline (omega=180) = [protein]-peptidylproline (omega=0). Functionally, involved in protein export. Acts as a chaperone by maintaining the newly synthesized protein in an open conformation. Functions as a peptidyl-prolyl cis-trans isomerase. This chain is Trigger factor 1, found in Desulfitobacterium hafniense (strain Y51).